A 142-amino-acid chain; its full sequence is HTH-type transcriptional regulator MntR (142 aa).

One can recognise an HTH dtxR-type domain in the interval 1–63 (MPTPSMEDYI…YEKYRGLVLT (63 aa)). Residues Asp8, Glu11, His77, Glu99, Glu102, and His103 each contribute to the Mn(2+) site.

It belongs to the DtxR/MntR family. Homodimer.

Its subcellular location is the cytoplasm. Its activity is regulated as follows. DNA binding is strongly activated by Mn(2+). Central regulator of manganese homeostasis. This chain is HTH-type transcriptional regulator MntR, found in Bacillus mycoides (strain KBAB4) (Bacillus weihenstephanensis).